The chain runs to 186 residues: Peptidyl-tRNA hydrolase (186 aa).

Tyr-14 serves as a coordination point for tRNA. The active-site Proton acceptor is His-19. Tyr-64, Asn-66, and Asn-112 together coordinate tRNA.

It belongs to the PTH family. In terms of assembly, monomer.

Its subcellular location is the cytoplasm. The catalysed reaction is an N-acyl-L-alpha-aminoacyl-tRNA + H2O = an N-acyl-L-amino acid + a tRNA + H(+). Hydrolyzes ribosome-free peptidyl-tRNAs (with 1 or more amino acids incorporated), which drop off the ribosome during protein synthesis, or as a result of ribosome stalling. Its function is as follows. Catalyzes the release of premature peptidyl moieties from peptidyl-tRNA molecules trapped in stalled 50S ribosomal subunits, and thus maintains levels of free tRNAs and 50S ribosomes. This is Peptidyl-tRNA hydrolase from Bacillus cereus (strain Q1).